A 170-amino-acid polypeptide reads, in one-letter code: Fibroblast growth factor 2 (170 aa).

The segment at 1 to 21 is disordered; the sequence is VGGRGRGRGTAAAARREPGGA. An omega-N-methylarginine; alternate mark is found at R4, R6, and R8. A symmetric dimethylarginine; alternate mark is found at R4, R6, and R8. Low complexity predominate over residues 9-21; the sequence is GTAAAARREPGGA. N51 contacts heparin. Y97 is modified (phosphotyrosine; by TEC). Residue K110 forms a Glycyl lysine isopeptide (Lys-Gly) (interchain with G-Cter in SUMO1) linkage. A heparin-binding region spans residues 143–159; that stretch reads KRTGQYKLGSKTGPGQK.

It belongs to the heparin-binding growth factors family. As to quaternary structure, monomer. Homodimer. Interacts with FGFR1, FGFR2, FGFR3 and FGFR4. Affinity between fibroblast growth factors (FGFs) and their receptors is increased by heparan sulfate glycosaminoglycans that function as coreceptors. Interacts with CSPG4, FGFBP1 and TEC. Found in a complex with FGFBP1, FGF1 and FGF2. Interacts with FGFBP3. Interacts with integrin ITGAV:ITGB3; the interaction is required for FGF2 signaling. Interacts with SNORC (via the extracellular domain). Interacts with glypican GPC3. Post-translationally, the N-terminus of isoform 2 is blocked. Phosphorylation at Tyr-97 regulates FGF2 unconventional secretion.

The protein resides in the secreted. It localises to the nucleus. Functionally, acts as a ligand for FGFR1, FGFR2, FGFR3 and FGFR4. Also acts as an integrin ligand which is required for FGF2 signaling. Binds to integrin ITGAV:ITGB3. Plays an important role in the regulation of cell survival, cell division, cell differentiation and cell migration. Functions as a potent mitogen in vitro. Can induce angiogenesis. Mediates phosphorylation of ERK1/2 and thereby promotes retinal lens fiber differentiation. In Cavia porcellus (Guinea pig), this protein is Fibroblast growth factor 2 (FGF2).